Consider the following 216-residue polypeptide: Peptide methionine sulfoxide reductase MsrA (216 aa).

C57 is an active-site residue.

Belongs to the MsrA Met sulfoxide reductase family.

It carries out the reaction L-methionyl-[protein] + [thioredoxin]-disulfide + H2O = L-methionyl-(S)-S-oxide-[protein] + [thioredoxin]-dithiol. The catalysed reaction is [thioredoxin]-disulfide + L-methionine + H2O = L-methionine (S)-S-oxide + [thioredoxin]-dithiol. In terms of biological role, has an important function as a repair enzyme for proteins that have been inactivated by oxidation. Catalyzes the reversible oxidation-reduction of methionine sulfoxide in proteins to methionine. The polypeptide is Peptide methionine sulfoxide reductase MsrA (Agrobacterium fabrum (strain C58 / ATCC 33970) (Agrobacterium tumefaciens (strain C58))).